A 438-amino-acid polypeptide reads, in one-letter code: Protein translocase subunit SecY (438 aa).

10 helical membrane passes run 18-38 (ILFTLGILVLYRVSAALPSPG), 76-96 (VGVMPYITASIIVQLLTVVIP), 121-141 (IALAVLQATSIVALAANGGLL), 154-174 (IFSLVVIVLVMTGGAALVMWM), 177-197 (LITERGIGNGMSLLIFVGIAA), 212-232 (GVIFAAVCLAALVIIVGVVFV), 269-289 (VIPVIFASSLIYIPHLITQLV), 315-335 (PVYINIYFGLIIFFTYFYVSV), 375-395 (LPGSIYLGAIAVLPNLFLQIG), and 398-418 (GEVQNLPFGGTAVLIMIGVGL).

Belongs to the SecY/SEC61-alpha family. In terms of assembly, component of the Sec protein translocase complex. Heterotrimer consisting of SecY, SecE and SecG subunits. The heterotrimers can form oligomers, although 1 heterotrimer is thought to be able to translocate proteins. Interacts with the ribosome. Interacts with SecDF, and other proteins may be involved. Interacts with SecA.

It localises to the cell membrane. Its function is as follows. The central subunit of the protein translocation channel SecYEG. Consists of two halves formed by TMs 1-5 and 6-10. These two domains form a lateral gate at the front which open onto the bilayer between TMs 2 and 7, and are clamped together by SecE at the back. The channel is closed by both a pore ring composed of hydrophobic SecY resides and a short helix (helix 2A) on the extracellular side of the membrane which forms a plug. The plug probably moves laterally to allow the channel to open. The ring and the pore may move independently. The polypeptide is Protein translocase subunit SecY (Mycobacterium leprae (strain TN)).